The chain runs to 219 residues: Probable nicotinate-nucleotide adenylyltransferase (219 aa).

This sequence belongs to the NadD family.

The enzyme catalyses nicotinate beta-D-ribonucleotide + ATP + H(+) = deamido-NAD(+) + diphosphate. Its pathway is cofactor biosynthesis; NAD(+) biosynthesis; deamido-NAD(+) from nicotinate D-ribonucleotide: step 1/1. Its function is as follows. Catalyzes the reversible adenylation of nicotinate mononucleotide (NaMN) to nicotinic acid adenine dinucleotide (NaAD). The chain is Probable nicotinate-nucleotide adenylyltransferase from Pseudomonas putida (strain W619).